The sequence spans 556 residues: CDP-diacylglycerol--glycerol-3-phosphate 3-phosphatidyltransferase, mitochondrial (556 aa).

A mitochondrion-targeting transit peptide spans 1–28 (MAVAAAAAAGPVFWRRLLGLLPGRPGLA). Serine 49 is modified (phosphoserine). 124–131 (ASLYLGTG) contacts ATP. PLD phosphodiesterase domains follow at residues 215–241 (TIGLQHIKVYLFDNSVILSGANLSDSY) and 460–493 (RGWTFHAKGLWLYLAGSSLPCLTLIGSPNFGYRS). Catalysis depends on residues histidine 220, lysine 222, and aspartate 227.

This sequence belongs to the CDP-alcohol phosphatidyltransferase class-II family.

It localises to the mitochondrion. The catalysed reaction is a CDP-1,2-diacyl-sn-glycerol + sn-glycerol 3-phosphate = a 1,2-diacyl-sn-glycero-3-phospho-(1'-sn-glycero-3'-phosphate) + CMP + H(+). Its pathway is phospholipid metabolism; phosphatidylglycerol biosynthesis; phosphatidylglycerol from CDP-diacylglycerol: step 1/2. Its activity is regulated as follows. Activated by calcium and magnesium and inhibited by other bivalent cations. Its function is as follows. Functions in the biosynthesis of the anionic phospholipids phosphatidylglycerol and cardiolipin. In Homo sapiens (Human), this protein is CDP-diacylglycerol--glycerol-3-phosphate 3-phosphatidyltransferase, mitochondrial (PGS1).